Reading from the N-terminus, the 226-residue chain is MARKEWKVLLIEDDPMVQEVNKDFITTVKGVTVCATAGNGEEGMKLIKEEQPDLVILDVYMPKKDGIKTLQEIRKQKLEVDVIVVSAAKDKETISLMLQNGAVDYILKPFKLERMRQALEKYKQYKQKIEANDTLSQEQLDAILNIPQQAVQDLPKGLNHFTMNEVTAFLKQQTASLSAEEVAKALGIARVTARRYLDYLEKTGIIKLDVQYGGVGRPVNRYVLKG.

In terms of domain architecture, Response regulatory spans 7–123 (KVLLIEDDPM…RMRQALEKYK (117 aa)). A 4-aspartylphosphate modification is found at Asp-58. Positions 179–198 (AEEVAKALGIARVTARRYLD) form a DNA-binding region, H-T-H motif.

In terms of processing, phosphorylated by DctS.

It is found in the cytoplasm. Member of the two-component regulatory system DctS/DctR. Essential for expression of dctP. This is Probable C4-dicarboxylate response regulator DctR (dctR) from Bacillus subtilis (strain 168).